The primary structure comprises 224 residues: Phosphoribosylformylglycinamidine synthase subunit PurQ (224 aa).

Positions 3-224 (FGVVVFPGSN…GLLEKVVALA (222 aa)) constitute a Glutamine amidotransferase type-1 domain. Cys86 functions as the Nucleophile in the catalytic mechanism. Active-site residues include His195 and Glu197.

In terms of assembly, part of the FGAM synthase complex composed of 1 PurL, 1 PurQ and 2 PurS subunits.

Its subcellular location is the cytoplasm. It catalyses the reaction N(2)-formyl-N(1)-(5-phospho-beta-D-ribosyl)glycinamide + L-glutamine + ATP + H2O = 2-formamido-N(1)-(5-O-phospho-beta-D-ribosyl)acetamidine + L-glutamate + ADP + phosphate + H(+). The catalysed reaction is L-glutamine + H2O = L-glutamate + NH4(+). Its pathway is purine metabolism; IMP biosynthesis via de novo pathway; 5-amino-1-(5-phospho-D-ribosyl)imidazole from N(2)-formyl-N(1)-(5-phospho-D-ribosyl)glycinamide: step 1/2. Functionally, part of the phosphoribosylformylglycinamidine synthase complex involved in the purines biosynthetic pathway. Catalyzes the ATP-dependent conversion of formylglycinamide ribonucleotide (FGAR) and glutamine to yield formylglycinamidine ribonucleotide (FGAM) and glutamate. The FGAM synthase complex is composed of three subunits. PurQ produces an ammonia molecule by converting glutamine to glutamate. PurL transfers the ammonia molecule to FGAR to form FGAM in an ATP-dependent manner. PurS interacts with PurQ and PurL and is thought to assist in the transfer of the ammonia molecule from PurQ to PurL. The chain is Phosphoribosylformylglycinamidine synthase subunit PurQ from Nostoc sp. (strain PCC 7120 / SAG 25.82 / UTEX 2576).